The sequence spans 432 residues: FLYWCH-type zinc finger-containing protein peb-1 (432 aa).

Residues 1 to 33 (MLGLEKPLSSDISSSSTDTSAISPISVSSMPLS) are disordered. A compositionally biased stretch (low complexity) spans 9-26 (SSDISSSSTDTSAISPIS). A DNA-binding region (required for DNA-binding) is located at residues 30-188 (MPLSPDKEKK…RNKEGKPRKP (159 aa)). Residues 53-120 (IVTSFKGYQK…NACTKNTHNH (68 aa)) form an FLYWCH-type zinc finger. The segment at 174–195 (SLVSARNKEGKPRKPKSKTSTN) is disordered.

The protein localises to the nucleus. Its function is as follows. Putative transcription factor. Binds to specific sequence motif 5'-[TC][AGT]TGCC[GA][AT]-3' in regulatory elements of target genes such as myosin myo-2. May modulate gene expression, perhaps acting in opposition to transcription factor pha-4. Involved in morphogenesis, perhaps especially in formation of the pharynx. Plays roles in molting, feeding and morphology. The chain is FLYWCH-type zinc finger-containing protein peb-1 from Caenorhabditis briggsae.